A 351-amino-acid polypeptide reads, in one-letter code: UDP-N-acetylglucosamine--N-acetylmuramyl-(pentapeptide) pyrophosphoryl-undecaprenol N-acetylglucosamine transferase (351 aa).

UDP-N-acetyl-alpha-D-glucosamine-binding positions include 13-15 (TGG), asparagine 125, arginine 161, serine 189, isoleucine 241, 260-265 (ALTVCE), and glutamine 285.

It belongs to the glycosyltransferase 28 family. MurG subfamily.

It is found in the cell inner membrane. It catalyses the reaction di-trans,octa-cis-undecaprenyl diphospho-N-acetyl-alpha-D-muramoyl-L-alanyl-D-glutamyl-meso-2,6-diaminopimeloyl-D-alanyl-D-alanine + UDP-N-acetyl-alpha-D-glucosamine = di-trans,octa-cis-undecaprenyl diphospho-[N-acetyl-alpha-D-glucosaminyl-(1-&gt;4)]-N-acetyl-alpha-D-muramoyl-L-alanyl-D-glutamyl-meso-2,6-diaminopimeloyl-D-alanyl-D-alanine + UDP + H(+). It participates in cell wall biogenesis; peptidoglycan biosynthesis. In terms of biological role, cell wall formation. Catalyzes the transfer of a GlcNAc subunit on undecaprenyl-pyrophosphoryl-MurNAc-pentapeptide (lipid intermediate I) to form undecaprenyl-pyrophosphoryl-MurNAc-(pentapeptide)GlcNAc (lipid intermediate II). This is UDP-N-acetylglucosamine--N-acetylmuramyl-(pentapeptide) pyrophosphoryl-undecaprenol N-acetylglucosamine transferase from Haemophilus influenzae (strain PittGG).